The following is a 166-amino-acid chain: Phospholipase A2 inhibitor A1 (166 aa).

A signal peptide spans 1 to 19 (MRLILLSGLLLLGIFLANG). The 116-residue stretch at 46-161 (LKGSFLIVHK…CDDNLLVVCE (116 aa)) folds into the C-type lectin domain. Intrachain disulfides connect cysteine 83–cysteine 160 and cysteine 138–cysteine 152. N-linked (GlcNAc...) asparagine glycosylation is present at asparagine 122.

This sequence belongs to the alpha-type phospholipase A2 inhibitor family. Homotrimer; non-covalently linked. As to expression, expressed by the liver.

The protein localises to the secreted. Functionally, this phospholipase A2 inhibitor binds directly phospholipase A2 in the presence or absence of calcium. This chain is Phospholipase A2 inhibitor A1, found in Bothrops neuwiedi (Neuwied's lancehead).